The following is a 1034-amino-acid chain: FERM domain-containing protein 4B (1034 aa).

The FERM domain maps to 59–361 (RHCQVHLLDD…SQHQFYLDRK (303 aa)). Ser372 carries the phosphoserine modification. Coiled coils occupy residues 417–450 (EVSEEQKREKILELKKKEKLLQEKLLKKVEELKK) and 531–561 (KKKRKQDYTDAMKKLQEIENAINEYRIRCGK). Residues 542–971 (MKKLQEIENA…TQLTIGLSDY (430 aa)) are necessary for adherens junction and tight junction localization. Low complexity predominate over residues 576-589 (PSESSSLSDTTTYD). Disordered stretches follow at residues 576–614 (PSESSSLSDTTTYDDPSDAFTFPGQRSSSVPHSPRILPP), 635–698 (DTRQ…LESQ), 712–735 (FSLSKSQRSSSTEILDDGSSYTSQ), and 752–786 (TTQTLDTRTRGRRRSKKQNVSTSNSGSMPNLAQKD). Ser608 carries the phosphoserine modification. Composition is skewed to polar residues over residues 635–650 (DTRQSREMLSTHSSPY) and 663–674 (MPTTPVLTRNAY). The span at 675-685 (SSSHLEPESSS) shows a compositional bias: low complexity. Ser697 is subject to Phosphoserine. A compositionally biased stretch (low complexity) spans 713–722 (SLSKSQRSSS). Over residues 769 to 781 (QNVSTSNSGSMPN) the composition is skewed to polar residues. Lys882 is covalently cross-linked (Glycyl lysine isopeptide (Lys-Gly) (interchain with G-Cter in SUMO2)). 2 disordered regions span residues 905 to 925 (RASGQKDQGHSPQTSFDSDRG) and 1004 to 1034 (DGTDGNQLEDNLESSEQRLFWHEDSKPGTLV). Over residues 906-920 (ASGQKDQGHSPQTSF) the composition is skewed to polar residues. Ser915 carries the post-translational modification Phosphoserine. Basic and acidic residues predominate over residues 1018-1034 (SEQRLFWHEDSKPGTLV). Lys1029 is covalently cross-linked (Glycyl lysine isopeptide (Lys-Gly) (interchain with G-Cter in SUMO2)).

Interacts with CYTH3. Interacts with PARD3. Interacts with CYTH1.

The protein resides in the cytoplasm. Its subcellular location is the cytoskeleton. The protein localises to the cell junction. It is found in the tight junction. It localises to the adherens junction. Member of GRP1 signaling complexes that are acutely recruited to plasma membrane ruffles in response to insulin receptor signaling. May function as a scaffolding protein that regulates epithelial cell polarity by connecting ARF6 activation with the PAR3 complex. Plays a redundant role with FRMD4A in epithelial polarization. The polypeptide is FERM domain-containing protein 4B (Homo sapiens (Human)).